A 201-amino-acid chain; its full sequence is UPF0301 protein Arad_1256 (201 aa).

The protein belongs to the UPF0301 (AlgH) family.

The chain is UPF0301 protein Arad_1256 from Rhizobium rhizogenes (strain K84 / ATCC BAA-868) (Agrobacterium radiobacter).